The sequence spans 120 residues: Seripauperin-8 (120 aa).

Positions 1-20 (MVKLTSIAAGVAAIAATASA) are cleaved as a signal peptide.

The protein belongs to the SRP1/TIP1 family. Seripauperin subfamily.

The polypeptide is Seripauperin-8 (PAU8) (Saccharomyces cerevisiae (strain ATCC 204508 / S288c) (Baker's yeast)).